We begin with the raw amino-acid sequence, 570 residues long: Sulfite reductase [NADPH] hemoprotein beta-component (570 aa).

Residues Cys434, Cys440, Cys479, and Cys483 each contribute to the [4Fe-4S] cluster site. Cys483 lines the siroheme pocket.

Belongs to the nitrite and sulfite reductase 4Fe-4S domain family. As to quaternary structure, alpha(8)-beta(8). The alpha component is a flavoprotein, the beta component is a hemoprotein. Siroheme serves as cofactor. The cofactor is [4Fe-4S] cluster.

It catalyses the reaction hydrogen sulfide + 3 NADP(+) + 3 H2O = sulfite + 3 NADPH + 4 H(+). It functions in the pathway sulfur metabolism; hydrogen sulfide biosynthesis; hydrogen sulfide from sulfite (NADPH route): step 1/1. In terms of biological role, component of the sulfite reductase complex that catalyzes the 6-electron reduction of sulfite to sulfide. This is one of several activities required for the biosynthesis of L-cysteine from sulfate. The chain is Sulfite reductase [NADPH] hemoprotein beta-component from Escherichia coli O17:K52:H18 (strain UMN026 / ExPEC).